The following is a 167-amino-acid chain: 3-dehydroquinate dehydratase (167 aa).

Tyr22 serves as the catalytic Proton acceptor. Positions 76, 82, and 89 each coordinate substrate. The active-site Proton donor is His102. Substrate contacts are provided by residues 103 to 104 (LT) and Arg113.

The protein belongs to the type-II 3-dehydroquinase family. In terms of assembly, homododecamer.

It carries out the reaction 3-dehydroquinate = 3-dehydroshikimate + H2O. Its pathway is metabolic intermediate biosynthesis; chorismate biosynthesis; chorismate from D-erythrose 4-phosphate and phosphoenolpyruvate: step 3/7. Its function is as follows. Catalyzes a trans-dehydration via an enolate intermediate. The protein is 3-dehydroquinate dehydratase of Helicobacter pylori (strain Shi470).